A 202-amino-acid polypeptide reads, in one-letter code: Imidazoleglycerol-phosphate dehydratase (202 aa).

It belongs to the imidazoleglycerol-phosphate dehydratase family.

It is found in the cytoplasm. It catalyses the reaction D-erythro-1-(imidazol-4-yl)glycerol 3-phosphate = 3-(imidazol-4-yl)-2-oxopropyl phosphate + H2O. It participates in amino-acid biosynthesis; L-histidine biosynthesis; L-histidine from 5-phospho-alpha-D-ribose 1-diphosphate: step 6/9. The sequence is that of Imidazoleglycerol-phosphate dehydratase from Corynebacterium diphtheriae (strain ATCC 700971 / NCTC 13129 / Biotype gravis).